A 146-amino-acid chain; its full sequence is Histone H2A.1 (146 aa).

Position 1 is an N-acetylmethionine (Met1). Positions 1 to 24 (MDATKTTKGAGGRKGGPRKKSVTK) are disordered. The short motif at 142-145 (SPKK) is the SPKK motif element.

The protein belongs to the histone H2A family. As to quaternary structure, the nucleosome is a histone octamer containing two molecules each of H2A, H2B, H3 and H4 assembled in one H3-H4 heterotetramer and two H2A-H2B heterodimers. The octamer wraps approximately 147 bp of DNA. High expression in meristematic tissues, in cells of the root pericycle and in shoot cortical cells undergoing endoduplication of their DNA.

It is found in the nucleus. The protein localises to the chromosome. Functionally, core component of nucleosome. Nucleosomes wrap and compact DNA into chromatin, limiting DNA accessibility to the cellular machineries which require DNA as a template. Histones thereby play a central role in transcription regulation, DNA repair, DNA replication and chromosomal stability. DNA accessibility is regulated via a complex set of post-translational modifications of histones, also called histone code, and nucleosome remodeling. In Solanum lycopersicum (Tomato), this protein is Histone H2A.1.